The following is a 235-amino-acid chain: Urease accessory protein UreF (235 aa).

It belongs to the UreF family. UreD, UreF and UreG form a complex that acts as a GTP-hydrolysis-dependent molecular chaperone, activating the urease apoprotein by helping to assemble the nickel containing metallocenter of UreC. The UreE protein probably delivers the nickel.

It localises to the cytoplasm. Its function is as follows. Required for maturation of urease via the functional incorporation of the urease nickel metallocenter. This Haemophilus influenzae (strain ATCC 51907 / DSM 11121 / KW20 / Rd) protein is Urease accessory protein UreF.